Reading from the N-terminus, the 637-residue chain is 1-deoxy-D-xylulose-5-phosphate synthase (637 aa).

Thiamine diphosphate-binding positions include histidine 76 and 117–119; that span reads GHS. Aspartate 148 contacts Mg(2+). Thiamine diphosphate contacts are provided by residues 149–150, asparagine 177, tyrosine 294, and glutamate 381; that span reads GA. Residue asparagine 177 participates in Mg(2+) binding.

The protein belongs to the transketolase family. DXPS subfamily. Homodimer. Requires Mg(2+) as cofactor. The cofactor is thiamine diphosphate.

It carries out the reaction D-glyceraldehyde 3-phosphate + pyruvate + H(+) = 1-deoxy-D-xylulose 5-phosphate + CO2. It functions in the pathway metabolic intermediate biosynthesis; 1-deoxy-D-xylulose 5-phosphate biosynthesis; 1-deoxy-D-xylulose 5-phosphate from D-glyceraldehyde 3-phosphate and pyruvate: step 1/1. In terms of biological role, catalyzes the acyloin condensation reaction between C atoms 2 and 3 of pyruvate and glyceraldehyde 3-phosphate to yield 1-deoxy-D-xylulose-5-phosphate (DXP). This is 1-deoxy-D-xylulose-5-phosphate synthase from Neisseria gonorrhoeae (strain NCCP11945).